A 182-amino-acid chain; its full sequence is Riboflavin kinase (182 aa).

Positions 39 and 41 each coordinate Mg(2+). Glu-117 acts as the Nucleophile in catalysis.

The protein belongs to the flavokinase family. Requires Zn(2+) as cofactor. Mg(2+) is required as a cofactor.

It carries out the reaction riboflavin + ATP = FMN + ADP + H(+). Its pathway is cofactor biosynthesis; FMN biosynthesis; FMN from riboflavin (ATP route): step 1/1. In terms of biological role, catalyzes the phosphorylation of riboflavin (vitamin B2) to form flavin mononucleotide (FMN) coenzyme. The sequence is that of Riboflavin kinase (FMN1) from Lodderomyces elongisporus (strain ATCC 11503 / CBS 2605 / JCM 1781 / NBRC 1676 / NRRL YB-4239) (Yeast).